A 110-amino-acid polypeptide reads, in one-letter code: Protein YcgL (110 aa).

In terms of domain architecture, YcgL spans 14 to 98; sequence MFCVIYRSSK…PPEDLLKQHL (85 aa). Residues 87–110 are disordered; that stretch reads PPPPEDLLKQHLSSVGQNTSPADR. Residues 97–110 show a composition bias toward polar residues; that stretch reads HLSSVGQNTSPADR.

The protein is Protein YcgL of Salmonella choleraesuis (strain SC-B67).